The chain runs to 1659 residues: Daxx-like protein (1659 aa).

Disordered regions lie at residues M1 to L25 and Q265 to L336. Residues L438–Q469 adopt a coiled-coil conformation. Composition is skewed to low complexity over residues S506–Q520, K528–F542, and G600–Q625. 7 disordered regions span residues S506 to F542, G600 to G645, S658 to K713, T872 to G894, L924 to Q952, V1023 to A1060, and F1536 to D1555. Positions K626–H635 are enriched in polar residues. Low complexity-rich tracts occupy residues S636–G645 and S658–Q698. 2 stretches are compositionally biased toward polar residues: residues R699–P711 and A885–G894. Residues A870–S1659 form a necessary for interaction with His3.3A and His3.3B region. A compositionally biased stretch (low complexity) spans L924–T937. Residues D1541 to D1555 show a composition bias toward acidic residues.

In terms of assembly, interacts with p53 (via C-terminus). Interacts (via C-terminus) with His3.3A and His3.3B. Interacts with asf1. Ubiquitously expressed with higher levels in the head (at protein level). Expressed in the germ line, with prominent expression in primary spermatocytes and meiotic spermatocytes (at protein level). In ovaries, expressed in nurse cells and in the germinal vesicle of the ovarian follicle at stage 10 (at protein level).

The protein localises to the cytoplasm. The protein resides in the cytosol. Its subcellular location is the nucleus. It localises to the chromosome. In terms of biological role, transcription regulator. Acts as a histone chaperone that facilitates deposition of histone H3.3. Has a role in chromatin remodeling together with asf1 and XNP. Has role in the transcriptional apoptotic response to oxidative and UV stress. The protein is Daxx-like protein of Drosophila melanogaster (Fruit fly).